Reading from the N-terminus, the 41-residue chain is Large ribosomal subunit protein bL36 (41 aa).

The protein belongs to the bacterial ribosomal protein bL36 family.

The sequence is that of Large ribosomal subunit protein bL36 from Rickettsia africae (strain ESF-5).